We begin with the raw amino-acid sequence, 274 residues long: Aliphatic sulfonates import ATP-binding protein SsuB 2 (274 aa).

Residues 21–242 (LALRGVARRF…SRGSARLAAL (222 aa)) form the ABC transporter domain. 53–60 (GRSGCGKS) is a binding site for ATP.

This sequence belongs to the ABC transporter superfamily. Aliphatic sulfonates importer (TC 3.A.1.17.2) family. In terms of assembly, the complex is composed of two ATP-binding proteins (SsuB), two transmembrane proteins (SsuC) and a solute-binding protein (SsuA).

Its subcellular location is the cell inner membrane. It catalyses the reaction ATP + H2O + aliphatic sulfonate-[sulfonate-binding protein]Side 1 = ADP + phosphate + aliphatic sulfonateSide 2 + [sulfonate-binding protein]Side 1.. In terms of biological role, part of the ABC transporter complex SsuABC involved in aliphatic sulfonates import. Responsible for energy coupling to the transport system. The protein is Aliphatic sulfonates import ATP-binding protein SsuB 2 of Pseudomonas aeruginosa (strain UCBPP-PA14).